Consider the following 397-residue polypeptide: Acetate kinase (397 aa).

Asn7 serves as a coordination point for Mg(2+). Lys14 is an ATP binding site. Substrate is bound at residue Arg91. Catalysis depends on Asp148, which acts as the Proton donor/acceptor. Residues 208 to 212 (HIGNG), 283 to 285 (DMR), and 331 to 335 (GVGEN) contribute to the ATP site. Mg(2+) is bound at residue Glu384.

This sequence belongs to the acetokinase family. In terms of assembly, homodimer. Mg(2+) serves as cofactor. Requires Mn(2+) as cofactor.

Its subcellular location is the cytoplasm. The catalysed reaction is acetate + ATP = acetyl phosphate + ADP. Its pathway is metabolic intermediate biosynthesis; acetyl-CoA biosynthesis; acetyl-CoA from acetate: step 1/2. Catalyzes the formation of acetyl phosphate from acetate and ATP. Can also catalyze the reverse reaction. The polypeptide is Acetate kinase (Azobacteroides pseudotrichonymphae genomovar. CFP2).